The following is a 445-amino-acid chain: Phosphoglucosamine mutase (445 aa).

The Phosphoserine intermediate role is filled by S102. Positions 102, 241, 243, and 245 each coordinate Mg(2+). S102 carries the phosphoserine modification.

The protein belongs to the phosphohexose mutase family. Requires Mg(2+) as cofactor. Post-translationally, activated by phosphorylation.

It carries out the reaction alpha-D-glucosamine 1-phosphate = D-glucosamine 6-phosphate. Catalyzes the conversion of glucosamine-6-phosphate to glucosamine-1-phosphate. The polypeptide is Phosphoglucosamine mutase (Edwardsiella ictaluri (strain 93-146)).